A 425-amino-acid polypeptide reads, in one-letter code: MAFLALGINHKTASVDVRERVAFTPEQLVEALQQLCHLTESREAAILSTCNRSELYIEHEHLGADSILAWLANYHHLSLEELRASAYVHEDDAAVRHMMRVASGLDSLVLGEPQILGQMKSAYAVAREAGTVGPLLGRLFQATFSAAKQVRTDTAIGENPVSVAFAAVSLAKQIFSDLQRSQALLIGAGETITLVARHLHDLGVKRIVVANRTLERASMLAAEFGAHAVLLSDIPAELVNSDIVISSTASQLPILGKGAVESALKLRKHKPIFMVDIAVPRDIEPEVGELDDVYLYSVDDLHEVVAENLKSRQGAALAAEQLVSVGAEDFMSRLRELAAVDVLRAYRQQSERLRDEELSKAQRMLANGSNAEDVLIQLARGLTNKLLHAPSVQLKKLSAEGRVDALAMAQELFALGEGSTDKTPQ.

Substrate contacts are provided by residues 49-52 (TCNR), serine 107, 112-114 (EPQ), and glutamine 118. Cysteine 50 (nucleophile) is an active-site residue. 187 to 192 (GAGETI) is a binding site for NADP(+).

The protein belongs to the glutamyl-tRNA reductase family. Homodimer.

It carries out the reaction (S)-4-amino-5-oxopentanoate + tRNA(Glu) + NADP(+) = L-glutamyl-tRNA(Glu) + NADPH + H(+). It functions in the pathway porphyrin-containing compound metabolism; protoporphyrin-IX biosynthesis; 5-aminolevulinate from L-glutamyl-tRNA(Glu): step 1/2. In terms of biological role, catalyzes the NADPH-dependent reduction of glutamyl-tRNA(Glu) to glutamate 1-semialdehyde (GSA). This chain is Glutamyl-tRNA reductase, found in Pseudomonas savastanoi pv. phaseolicola (strain 1448A / Race 6) (Pseudomonas syringae pv. phaseolicola (strain 1448A / Race 6)).